The following is a 96-amino-acid chain: Envelope glycoprotein N (96 aa).

The N-terminal stretch at 1 to 21 (MPRSPLIVAVVAAALFAIVRG) is a signal peptide. Residues 22–54 (RDPLLDAMRREGAMDFWSAGCYARGVPLSEPPQ) lie on the Virion surface side of the membrane. A helical membrane pass occupies residues 55-75 (ALVVFYVALTAVMVAVALYAY). Residues 76 to 96 (GLCFRLMGASGPNKKESRGRG) lie on the Intravirion side of the membrane.

Belongs to the herpesviridae glycoprotein N family. In terms of assembly, interacts (via N-terminus) with gM (via N-terminus). The gM-gN heterodimer forms the gCII complex.

The protein resides in the virion membrane. The protein localises to the host membrane. Its subcellular location is the host Golgi apparatus. It localises to the host trans-Golgi network. In terms of biological role, envelope glycoprotein necessary for proper maturation of gM and modulation of its membrane fusion activity. Also plays a critical role in virion morphogenesis. In Bos taurus (Bovine), this protein is Envelope glycoprotein N.